Here is a 158-residue protein sequence, read N- to C-terminus: EOLA-like protein (158 aa).

Residues 6 to 92 (LSFRQPYAGF…IAGLVDIGET (87 aa)) form the ASCH domain.

This sequence belongs to the EOLA family.

This chain is EOLA-like protein, found in Pongo abelii (Sumatran orangutan).